Here is a 305-residue protein sequence, read N- to C-terminus: Delta-9 acyl-lipid desaturase 1 (305 aa).

The interval 1 to 20 (MSLSASEKEENNKKMAADKA) is disordered. 2 helical membrane passes run 39–59 (IVKA…PFNF) and 60–80 (TWPA…GITV). Fe cation contacts are provided by histidine 83, histidine 88, histidine 120, histidine 123, and histidine 124. Residues 83-88 (HRNLAH) carry the Histidine box-1 motif. A Histidine box-2 motif is present at residues 120 to 124 (HRYHH). A helical transmembrane segment spans residues 180-200 (VLYHILTFGFLLYYFGGLSFL). 4 residues coordinate Fe cation: histidine 223, histidine 252, histidine 255, and histidine 256. The short motif at 252-256 (HNNHH) is the Histidine box-3 element. Residues 268–288 (WWQIDISWYIVRFLEIIGLAT) form a helical membrane-spanning segment.

This sequence belongs to the fatty acid desaturase type 1 family. Fe cation is required as a cofactor. Strongly expressed in inflorescence meristems, leaves, and flowers, and weakly in roots and seedpods.

The protein resides in the endoplasmic reticulum membrane. It localises to the plastid. Its subcellular location is the chloroplast membrane. It functions in the pathway lipid metabolism; polyunsaturated fatty acid biosynthesis. Functionally, involved in delta-9 desaturation of fatty acids. Involved in the production of very-long-chain fatty acids (VLCFAs). May desaturate chloroplastic monogalactosyl diacylglycerol (MGDG) and alter chloroplast membrane fluidity, which is required to prime a cold acclimation response. The protein is Delta-9 acyl-lipid desaturase 1 of Arabidopsis thaliana (Mouse-ear cress).